A 255-amino-acid polypeptide reads, in one-letter code: Ribonuclease PH (255 aa).

Phosphate is bound by residues arginine 86 and 124 to 126 (GTR).

This sequence belongs to the RNase PH family. As to quaternary structure, homohexameric ring arranged as a trimer of dimers.

It catalyses the reaction tRNA(n+1) + phosphate = tRNA(n) + a ribonucleoside 5'-diphosphate. Its function is as follows. Phosphorolytic 3'-5' exoribonuclease that plays an important role in tRNA 3'-end maturation. Removes nucleotide residues following the 3'-CCA terminus of tRNAs; can also add nucleotides to the ends of RNA molecules by using nucleoside diphosphates as substrates, but this may not be physiologically important. Probably plays a role in initiation of 16S rRNA degradation (leading to ribosome degradation) during starvation. This is Ribonuclease PH from Hydrogenobaculum sp. (strain Y04AAS1).